Here is a 178-residue protein sequence, read N- to C-terminus: Adenine phosphoribosyltransferase (178 aa).

The protein belongs to the purine/pyrimidine phosphoribosyltransferase family. Homodimer.

It is found in the cytoplasm. It catalyses the reaction AMP + diphosphate = 5-phospho-alpha-D-ribose 1-diphosphate + adenine. The protein operates within purine metabolism; AMP biosynthesis via salvage pathway; AMP from adenine: step 1/1. Functionally, catalyzes a salvage reaction resulting in the formation of AMP, that is energically less costly than de novo synthesis. In Pseudoalteromonas atlantica (strain T6c / ATCC BAA-1087), this protein is Adenine phosphoribosyltransferase.